The following is a 64-amino-acid chain: Relaxin (64 aa).

Intrachain disulfides connect cysteine 11–cysteine 51, cysteine 23–cysteine 64, and cysteine 50–cysteine 55.

Belongs to the insulin family. Heterodimer of a B chain and an A chain linked by two disulfide bonds.

It localises to the secreted. This is Relaxin from Leucoraja erinaceus (Little skate).